Reading from the N-terminus, the 222-residue chain is MTSQSVAKKLNHCFSDQALFRTALTHRSFGTPNNERLEFLGDGVLDFVIAASLYHRFPDLPEGDLSRLRANLVRQETLHRLALELNIGAFLRLGEGELKSGGAQRPSILADALEALFGAIYLDAGFEASRAVIEKLFAPLLDDLKPGQFQKDAKTRLQEWLQGRKKALPRYHLLEATGAAHEQRFEIACEIESPALRTVGHGSSRRIAEQVAAEKALKELLA.

An RNase III domain is found at 3–125 (SQSVAKKLNH…LFGAIYLDAG (123 aa)). E38 lines the Mg(2+) pocket. D42 is a catalytic residue. Mg(2+) contacts are provided by D111 and E114. Residue E114 is part of the active site. Positions 152–222 (DAKTRLQEWL…AEKALKELLA (71 aa)) constitute a DRBM domain.

This sequence belongs to the ribonuclease III family. In terms of assembly, homodimer. It depends on Mg(2+) as a cofactor.

The protein resides in the cytoplasm. The catalysed reaction is Endonucleolytic cleavage to 5'-phosphomonoester.. Functionally, digests double-stranded RNA. Involved in the processing of primary rRNA transcript to yield the immediate precursors to the large and small rRNAs (23S and 16S). Processes some mRNAs, and tRNAs when they are encoded in the rRNA operon. Processes pre-crRNA and tracrRNA of type II CRISPR loci if present in the organism. The protein is Ribonuclease 3 of Dechloromonas aromatica (strain RCB).